Consider the following 84-residue polypeptide: Putative regulatory protein Hore_09800 (84 aa).

Belongs to the RemA family.

The protein is Putative regulatory protein Hore_09800 of Halothermothrix orenii (strain H 168 / OCM 544 / DSM 9562).